Here is a 68-residue protein sequence, read N- to C-terminus: Beta-defensin 1 (68 aa).

The signal sequence occupies residues 1 to 21 (MRTSYLLLFTLCLLLSEMASG). The propeptide occupies 22–32 (DNFLTGLGHRS). Disulfide bonds link Cys37-Cys66, Cys44-Cys59, and Cys49-Cys67.

The protein belongs to the beta-defensin family. Monomer. Homodimer.

It localises to the secreted. The protein resides in the membrane. Functionally, has bactericidal activity. May act as a ligand for C-C chemokine receptor CCR6. Positively regulates the sperm motility and bactericidal activity in a CCR6-dependent manner. Binds to CCR6 and triggers Ca2+ mobilization in the sperm which is important for its motility. The polypeptide is Beta-defensin 1 (DEFB1) (Allochrocebus preussi (Preuss's monkey)).